The sequence spans 493 residues: Glutamyl-tRNA(Gln) amidotransferase subunit A (493 aa).

Active-site charge relay system residues include Lys79 and Ser159. Ser183 serves as the catalytic Acyl-ester intermediate.

This sequence belongs to the amidase family. GatA subfamily. In terms of assembly, heterotrimer of A, B and C subunits.

The enzyme catalyses L-glutamyl-tRNA(Gln) + L-glutamine + ATP + H2O = L-glutaminyl-tRNA(Gln) + L-glutamate + ADP + phosphate + H(+). Its function is as follows. Allows the formation of correctly charged Gln-tRNA(Gln) through the transamidation of misacylated Glu-tRNA(Gln) in organisms which lack glutaminyl-tRNA synthetase. The reaction takes place in the presence of glutamine and ATP through an activated gamma-phospho-Glu-tRNA(Gln). This Rhizobium etli (strain ATCC 51251 / DSM 11541 / JCM 21823 / NBRC 15573 / CFN 42) protein is Glutamyl-tRNA(Gln) amidotransferase subunit A.